Reading from the N-terminus, the 255-residue chain is Imidazole glycerol phosphate synthase subunit HisF (255 aa).

Catalysis depends on residues D12 and D131.

It belongs to the HisA/HisF family. As to quaternary structure, heterodimer of HisH and HisF.

It is found in the cytoplasm. The catalysed reaction is 5-[(5-phospho-1-deoxy-D-ribulos-1-ylimino)methylamino]-1-(5-phospho-beta-D-ribosyl)imidazole-4-carboxamide + L-glutamine = D-erythro-1-(imidazol-4-yl)glycerol 3-phosphate + 5-amino-1-(5-phospho-beta-D-ribosyl)imidazole-4-carboxamide + L-glutamate + H(+). Its pathway is amino-acid biosynthesis; L-histidine biosynthesis; L-histidine from 5-phospho-alpha-D-ribose 1-diphosphate: step 5/9. Its function is as follows. IGPS catalyzes the conversion of PRFAR and glutamine to IGP, AICAR and glutamate. The HisF subunit catalyzes the cyclization activity that produces IGP and AICAR from PRFAR using the ammonia provided by the HisH subunit. In Salinispora tropica (strain ATCC BAA-916 / DSM 44818 / JCM 13857 / NBRC 105044 / CNB-440), this protein is Imidazole glycerol phosphate synthase subunit HisF.